The following is a 320-amino-acid chain: Malate dehydrogenase (320 aa).

Residues 10–15 (GAGQIG) and Asp34 contribute to the NAD(+) site. Arg83 and Arg89 together coordinate substrate. Residues Asn96 and 119-121 (ITN) contribute to the NAD(+) site. Substrate contacts are provided by Asn121 and Arg152. Catalysis depends on His176, which acts as the Proton acceptor.

Belongs to the LDH/MDH superfamily. MDH type 3 family.

The enzyme catalyses (S)-malate + NAD(+) = oxaloacetate + NADH + H(+). In terms of biological role, catalyzes the reversible oxidation of malate to oxaloacetate. This chain is Malate dehydrogenase, found in Jannaschia sp. (strain CCS1).